Here is a 146-residue protein sequence, read N- to C-terminus: Large-conductance mechanosensitive channel (146 aa).

Helical transmembrane passes span 21–41 (VGIIIGAAFTGIVSSLVADLI), 44–64 (IIGLITGGIDFSNLFVNLGDG), and 83–103 (GSFITAVINFLIIAWVVFLLV).

This sequence belongs to the MscL family. As to quaternary structure, homopentamer.

The protein resides in the cell inner membrane. Its function is as follows. Channel that opens in response to stretch forces in the membrane lipid bilayer. May participate in the regulation of osmotic pressure changes within the cell. In Cereibacter sphaeroides (strain ATCC 17023 / DSM 158 / JCM 6121 / CCUG 31486 / LMG 2827 / NBRC 12203 / NCIMB 8253 / ATH 2.4.1.) (Rhodobacter sphaeroides), this protein is Large-conductance mechanosensitive channel.